We begin with the raw amino-acid sequence, 368 residues long: tRNA/tmRNA (uracil-C(5))-methyltransferase (368 aa).

Residues glutamine 186, tyrosine 214, asparagine 219, glutamate 235, and aspartate 295 each contribute to the S-adenosyl-L-methionine site. The Nucleophile role is filled by cysteine 320. The active-site Proton acceptor is glutamate 354.

This sequence belongs to the class I-like SAM-binding methyltransferase superfamily. RNA M5U methyltransferase family. TrmA subfamily.

It carries out the reaction uridine(54) in tRNA + S-adenosyl-L-methionine = 5-methyluridine(54) in tRNA + S-adenosyl-L-homocysteine + H(+). The catalysed reaction is uridine(341) in tmRNA + S-adenosyl-L-methionine = 5-methyluridine(341) in tmRNA + S-adenosyl-L-homocysteine + H(+). Dual-specificity methyltransferase that catalyzes the formation of 5-methyluridine at position 54 (m5U54) in all tRNAs, and that of position 341 (m5U341) in tmRNA (transfer-mRNA). In Aromatoleum aromaticum (strain DSM 19018 / LMG 30748 / EbN1) (Azoarcus sp. (strain EbN1)), this protein is tRNA/tmRNA (uracil-C(5))-methyltransferase.